A 180-amino-acid chain; its full sequence is UPF0227 protein YcfP (180 aa).

This sequence belongs to the UPF0227 family.

The protein is UPF0227 protein YcfP of Salmonella choleraesuis (strain SC-B67).